The sequence spans 928 residues: DNA polymerase I (928 aa).

One can recognise a 5'-3' exonuclease domain in the interval 1 to 323 (MVQIPQNPLI…ADEAPEVTAT (323 aa)). In terms of domain architecture, 3'-5' exonuclease spans 324 to 517 (VISYDNYVTI…LHLKMWPDLQ (194 aa)). The segment at 324-928 (VISYDNYVTI…GSGENWDQAH (605 aa)) is klenow fragment. The interval 521–928 (GPLNVFENIE…GSGENWDQAH (408 aa)) is polymerase.

This sequence belongs to the DNA polymerase type-A family. As to quaternary structure, single-chain monomer with multiple functions.

It catalyses the reaction DNA(n) + a 2'-deoxyribonucleoside 5'-triphosphate = DNA(n+1) + diphosphate. Functionally, in addition to polymerase activity, this DNA polymerase exhibits 3'-5' and 5'-3' exonuclease activity. It is able to utilize nicked circular duplex DNA as a template and can unwind the parental DNA strand from its template. Genetic interactions among priB, dam, lexA, nagC, polA, rdgB, rdgB, rep and uup link the PriA-PriB replication restart pathway to DNA double-strand break repair. The sequence is that of DNA polymerase I (polA) from Escherichia coli (strain K12).